The following is a 341-amino-acid chain: MKALSKLKPEEGIWMVDAPKPEMGHNDLLIKIRKTAICGTDVHIYNWDEWSQNTIPVPMVVGHEYVGEVVDIGQEVRGFSIGDRVSGEGHITCGHCRNCRAGRTHLCRNTSGVGVNRDGAFAEYLVIPAFNAFKIPDDISDDLASIFDPFGNAVHTALSFDLVGEDVLITGAGPIGIMAAAVCRHVGARHVVITDVNEYRLELAQKMGATRAVNVAKEDLKDVMSELGMTEGFDVGLEMSGVPSAFHSMLDTMNHGGKVAMLGIPGGDMAIDWSKVIFKGLIIKGIYGREMFETWYKMASLIQSGLDISPIITHHYKVDEFQQGFDAMRSGQSGKVILNWD.

A Zn(2+)-binding site is contributed by Cys-38. Residues Thr-40 and His-43 each act as charge relay system in the active site. Positions 63, 64, 93, 96, 99, and 107 each coordinate Zn(2+). NAD(+) is bound by residues Ile-175, Asp-195, Arg-200, 262–264 (LGI), and 286–287 (IY).

The protein belongs to the zinc-containing alcohol dehydrogenase family. As to quaternary structure, homotetramer. The cofactor is Zn(2+).

Its subcellular location is the cytoplasm. It carries out the reaction L-threonine + NAD(+) = (2S)-2-amino-3-oxobutanoate + NADH + H(+). It participates in amino-acid degradation; L-threonine degradation via oxydo-reductase pathway; glycine from L-threonine: step 1/2. Functionally, catalyzes the NAD(+)-dependent oxidation of L-threonine to 2-amino-3-ketobutyrate. The protein is L-threonine 3-dehydrogenase of Shewanella woodyi (strain ATCC 51908 / MS32).